The sequence spans 122 residues: Large ribosomal subunit protein uL14 (122 aa).

This sequence belongs to the universal ribosomal protein uL14 family. In terms of assembly, part of the 50S ribosomal subunit. Forms a cluster with proteins L3 and L19. In the 70S ribosome, L14 and L19 interact and together make contacts with the 16S rRNA in bridges B5 and B8.

Its function is as follows. Binds to 23S rRNA. Forms part of two intersubunit bridges in the 70S ribosome. This is Large ribosomal subunit protein uL14 from Gemmatimonas aurantiaca (strain DSM 14586 / JCM 11422 / NBRC 100505 / T-27).